Here is a 424-residue protein sequence, read N- to C-terminus: Probable serine/threonine-protein kinase PBL15 (424 aa).

The Protein kinase domain maps to 99–380; it reads FSGNYLLGEG…AVVEALESLI (282 aa). Residues 105 to 113 and Lys134 contribute to the ATP site; that span reads LGEGGFGKV. Position 179 is a phosphotyrosine (Tyr179). The active-site Proton acceptor is Asp229. A Phosphoserine modification is found at Ser233. Thr264 and Thr269 each carry phosphothreonine. A Phosphotyrosine modification is found at Tyr277. The interval 390–424 is disordered; sequence GHWPLSPKSQGGKVSPKVRGDHRSGRKSAPGSLRS.

Belongs to the protein kinase superfamily. Ser/Thr protein kinase family. Interacts with the Xanthomonas campestris effector XopAC/AvrAC.

The protein resides in the cell membrane. The catalysed reaction is L-seryl-[protein] + ATP = O-phospho-L-seryl-[protein] + ADP + H(+). The enzyme catalyses L-threonyl-[protein] + ATP = O-phospho-L-threonyl-[protein] + ADP + H(+). May be involved in plant defense signaling. The protein is Probable serine/threonine-protein kinase PBL15 of Arabidopsis thaliana (Mouse-ear cress).